Reading from the N-terminus, the 373-residue chain is Alanine dehydrogenase (373 aa).

Substrate-binding residues include Arg-15 and Lys-74. The Proton donor/acceptor role is filled by His-95. Residues Ser-133, 177 to 178 (QA), Asp-197, Ser-219, 238 to 239 (VL), 266 to 269 (IAID), and 298 to 301 (VANM) contribute to the NAD(+) site. The active-site Proton donor/acceptor is the Asp-269.

This sequence belongs to the AlaDH/PNT family. In terms of assembly, homohexamer. Trimer of dimer.

It catalyses the reaction L-alanine + NAD(+) + H2O = pyruvate + NH4(+) + NADH + H(+). It functions in the pathway amino-acid degradation; L-alanine degradation via dehydrogenase pathway; NH(3) and pyruvate from L-alanine: step 1/1. Functionally, catalyzes the reversible reductive amination of pyruvate to L-alanine. May play a role in cell wall synthesis as L-alanine is an important constituent of the peptidoglycan layer. This chain is Alanine dehydrogenase (ald), found in Staphylococcus haemolyticus (strain JCSC1435).